The sequence spans 183 residues: Peptidyl-tRNA hydrolase (183 aa).

Tyr14 contacts tRNA. His19 (proton acceptor) is an active-site residue. 3 residues coordinate tRNA: Tyr64, Asn66, and Asn112.

This sequence belongs to the PTH family. In terms of assembly, monomer.

The protein localises to the cytoplasm. It catalyses the reaction an N-acyl-L-alpha-aminoacyl-tRNA + H2O = an N-acyl-L-amino acid + a tRNA + H(+). In terms of biological role, hydrolyzes ribosome-free peptidyl-tRNAs (with 1 or more amino acids incorporated), which drop off the ribosome during protein synthesis, or as a result of ribosome stalling. Functionally, catalyzes the release of premature peptidyl moieties from peptidyl-tRNA molecules trapped in stalled 50S ribosomal subunits, and thus maintains levels of free tRNAs and 50S ribosomes. The chain is Peptidyl-tRNA hydrolase from Anaplasma phagocytophilum (strain HZ).